The chain runs to 328 residues: Carbonic anhydrase-related protein 11 (328 aa).

The N-terminal stretch at methionine 1 to alanine 22 is a signal peptide. An Alpha-carbonic anhydrase domain is found at aspartate 33–arginine 303. Asparagine 118, asparagine 170, and asparagine 260 each carry an N-linked (GlcNAc...) asparagine glycan. The interval arginine 300–arginine 328 is disordered. Residues leucine 319–arginine 328 show a composition bias toward basic and acidic residues.

This sequence belongs to the alpha-carbonic anhydrase family.

It localises to the secreted. Its function is as follows. Does not have a catalytic activity. The protein is Carbonic anhydrase-related protein 11 (CA11) of Bos taurus (Bovine).